The primary structure comprises 100 residues: Putative exopolysaccharide production repressor protein y4xQ (100 aa).

The next 2 membrane-spanning stretches (helical) occupy residues 9-29 (ILWL…GSIS) and 35-55 (TMVG…FLLW). Positions 66 to 100 (TTGQFHGEEQPGDPRIAGTHGRTDGDPCFEDEDSR) are disordered.

This sequence to Rhizobium exopolysaccharide production repressor protein (ExoX).

The protein resides in the cell membrane. Functionally, could be involved in the inhibition of exopolysaccharide synthesis (EPS) and nodulation ability (nod). The protein is Putative exopolysaccharide production repressor protein y4xQ of Sinorhizobium fredii (strain NBRC 101917 / NGR234).